The chain runs to 1534 residues: DNA-directed RNA polymerase subunit beta'' (1534 aa).

Cysteine 220, cysteine 296, cysteine 303, and cysteine 306 together coordinate Zn(2+). Basic and acidic residues-rich tracts occupy residues 644 to 668 and 678 to 688; these read RTQE…RTRE and PENKYRTREGE. 2 disordered regions span residues 644-698 and 719-800; these read RTQE…EDEY and YRTL…KKEG. 2 stretches are compositionally biased toward acidic residues: residues 744–762 and 770–789; these read GEYE…SSED and TLEE…EYGS.

This sequence belongs to the RNA polymerase beta' chain family. RpoC2 subfamily. In terms of assembly, in plastids the minimal PEP RNA polymerase catalytic core is composed of four subunits: alpha, beta, beta', and beta''. When a (nuclear-encoded) sigma factor is associated with the core the holoenzyme is formed, which can initiate transcription. Requires Zn(2+) as cofactor.

Its subcellular location is the plastid. The protein resides in the chloroplast. It carries out the reaction RNA(n) + a ribonucleoside 5'-triphosphate = RNA(n+1) + diphosphate. In terms of biological role, DNA-dependent RNA polymerase catalyzes the transcription of DNA into RNA using the four ribonucleoside triphosphates as substrates. The sequence is that of DNA-directed RNA polymerase subunit beta'' from Saccharum officinarum (Sugarcane).